The following is a 140-amino-acid chain: Histone H2B.1, sperm (140 aa).

Residues 1–47 (MPSQRSPTKRSPTKRSPQKGAGKGGKGSKRGGKARRRGGAAVRRRRR) form a disordered region. Short sequence motifs (SPKK motif) lie at residues 6–9 (SPTK), 11–14 (SPTK), and 16–19 (SPQK). Basic residues-rich tracts occupy residues 7–17 (PTKRSPTKRSP) and 26–47 (KGSKRGGKARRRGGAAVRRRRR). Phosphoserine is present on residues S11 and S16. The O-linked (GlcNAc) serine glycan is linked to S127. K135 is covalently cross-linked (Glycyl lysine isopeptide (Lys-Gly) (interchain with G-Cter in ubiquitin)).

It belongs to the histone H2B family. In terms of assembly, the nucleosome is a histone octamer containing two molecules each of H2A, H2B, H3 and H4 assembled in one H3-H4 heterotetramer and two H2A-H2B heterodimers. The octamer wraps approximately 147 bp of DNA. In terms of processing, monoubiquitination of Lys-135 gives a specific tag for epigenetic transcriptional activation and is also prerequisite for histone H3 'Lys-4' and 'Lys-79' methylation. Post-translationally, phosphorylated on SPKK motifs 2 and 3; which may regulate DNA binding. Dephosphorylated during maturation of spermatids to mature sperm and rephosphorylated at fertilization. GlcNAcylation at Ser-127 promotes monoubiquitination of Lys-135. It fluctuates in response to extracellular glucose, and associates with transcribed genes.

The protein resides in the nucleus. It is found in the chromosome. Functionally, core component of nucleosome. Nucleosomes wrap and compact DNA into chromatin, limiting DNA accessibility to the cellular machineries which require DNA as a template. Histones thereby play a central role in transcription regulation, DNA repair, DNA replication and chromosomal stability. DNA accessibility is regulated via a complex set of post-translational modifications of histones, also called histone code, and nucleosome remodeling. This Strongylocentrotus purpuratus (Purple sea urchin) protein is Histone H2B.1, sperm.